We begin with the raw amino-acid sequence, 387 residues long: Beta-carotene 4-ketolase (387 aa).

The tract at residues 1 to 78 (MPHSIDMEDS…GNPTVDDASQ (78 aa)) is disordered. Composition is skewed to polar residues over residues 43–53 (NWQTQYHSSEG) and 65–78 (DATTGNPTVDDASQ).

It carries out the reaction echinenone + 2 AH2 + 2 O2 = canthaxanthin + 2 A + 3 H2O. It catalyses the reaction all-trans-beta-carotene + 2 AH2 + 2 O2 = echinenone + 2 A + 3 H2O. Its pathway is carotenoid biosynthesis. Its function is as follows. Involved in the biosynthesis of ketocarotenoids which are powerful anti-oxidative molecules. Catalyzes the conversion of beta-carotene to canthaxanthin via echinenone. The sequence is that of Beta-carotene 4-ketolase from Protosiphon botryoides (Green alga).